Reading from the N-terminus, the 322-residue chain is MADRDSGSEQGGAALGSGGSLGHPGSGSGSGGGGGGGGGGGGSGGGGGGAPGGLQHETQELASKRVDIQNKRFYLDVKQNAKGRFLKIAEVGAGGNKSRLTLSMSVAVEFRDYLGDFIEHYAQLGPSQPPDLAQAQDEPRRALKSEFLVRENRKYYMDLKENQRGRFLRIRQTVNRGPGLGSTQGQTIALPAQGLIEFRDALAKLIDDYGVEEEPAELPEGTSLTVDNKRFFFDVGSNKYGVFMRVSEVKPTYRNSITVPYKVWAKFGHTFCKYSEEMKKIQEKQREKRAACEQLHQQQQQQQEETAAATLLLQGEEEGEED.

Positions 1 to 55 are disordered; that stretch reads MADRDSGSEQGGAALGSGGSLGHPGSGSGSGGGGGGGGGGGGSGGGGGGAPGGLQ. An N-acetylalanine modification is found at alanine 2. Over residues 9 to 52 the composition is skewed to gly residues; sequence EQGGAALGSGGSLGHPGSGSGSGGGGGGGGGGGGSGGGGGGAPG. One copy of the PUR repeat I repeat lies at 60-125; sequence ELASKRVDIQ…DFIEHYAQLG (66 aa). The stretch at 142-213 is one PUR repeat II repeat; the sequence is ALKSEFLVRE…KLIDDYGVEE (72 aa). At serine 182 the chain carries Phosphoserine. One copy of the PUR repeat III repeat lies at 215-281; that stretch reads PAELPEGTSL…CKYSEEMKKI (67 aa). A compositionally biased stretch (low complexity) spans 295 to 314; it reads LHQQQQQQQEETAAATLLLQ. The interval 295–322 is disordered; that stretch reads LHQQQQQQQEETAAATLLLQGEEEGEED.

It belongs to the PUR DNA-binding protein family. In terms of assembly, homodimer, heterodimer with PURB and heterotrimer with PURB and YBX1/Y-box protein 1. Interacts with FMR1; this interaction occurs in association with polyribosome.

It localises to the nucleus. Functionally, this is a probable transcription activator that specifically binds the purine-rich single strand of the PUR element located upstream of the MYC gene. May play a role in the initiation of DNA replication and in recombination. This chain is Transcriptional activator protein Pur-alpha (PURA), found in Homo sapiens (Human).